A 60-amino-acid chain; its full sequence is Large ribosomal subunit protein bL32 (60 aa).

The segment covering 1 to 20 (MAVQKSRKSRSRRDMRRSHH) has biased composition (basic residues). Positions 1–60 (MAVQKSRKSRSRRDMRRSHHHMEVAELSIDATTGEKHRRHHMTKDGFYRGRQLFKASQED) are disordered.

It belongs to the bacterial ribosomal protein bL32 family.

The sequence is that of Large ribosomal subunit protein bL32 from Psychrobacter sp. (strain PRwf-1).